The following is a 427-amino-acid chain: Enolase (427 aa).

Position 163 (Q163) interacts with (2R)-2-phosphoglycerate. E205 serves as the catalytic Proton donor. 3 residues coordinate Mg(2+): D242, E285, and D312. Positions 337, 366, 367, and 388 each coordinate (2R)-2-phosphoglycerate. K337 acts as the Proton acceptor in catalysis.

It belongs to the enolase family. Mg(2+) is required as a cofactor.

Its subcellular location is the cytoplasm. It localises to the secreted. The protein localises to the cell surface. It catalyses the reaction (2R)-2-phosphoglycerate = phosphoenolpyruvate + H2O. Its pathway is carbohydrate degradation; glycolysis; pyruvate from D-glyceraldehyde 3-phosphate: step 4/5. Its function is as follows. Catalyzes the reversible conversion of 2-phosphoglycerate (2-PG) into phosphoenolpyruvate (PEP). It is essential for the degradation of carbohydrates via glycolysis. The polypeptide is Enolase (Paraburkholderia phytofirmans (strain DSM 17436 / LMG 22146 / PsJN) (Burkholderia phytofirmans)).